A 1355-amino-acid chain; its full sequence is NACHT, LRR and PYD domains-containing protein 1 homolog (1355 aa).

The region spanning 257–458 (KTVILCGDSG…SVPLLCWMVC (202 aa)) is the NACHT domain. 263–270 (GDSGRGKS) contacts ATP. The ZU5 stretch occupies residues 977-1109 (DSDQWVQVEP…FHAKILQPMF (133 aa)). Residues 977-1252 (DSDQWVQVEP…NKTESDLFQS (276 aa)) form the FIIND domain. Residues 1110 to 1252 (SPKTVLVKLG…NKTESDLFQS (143 aa)) form a UPA region. In terms of domain architecture, CARD spans 1278-1354 (LIKSVENVDT…NLLNHLPSSD (77 aa)).

This sequence belongs to the NLRP family. As to quaternary structure, interacts with the C-terminal part of nlrp1 (NACHT, LRR and PYD domains-containing protein 1, C-terminus) in absence of pathogens and other damage-associated signals. Interacts with the N-terminal part of nlrp1 (NACHT, LRR and PYD domains-containing protein 1, N-terminus) in absence of pathogens and other damage-associated signals. Homomultimer; forms the nlrp1 inflammasome polymeric complex, a filament composed of homopolymers of this form in response to pathogens and other damage-associated signals. The nlrp1 inflammasome polymeric complex associates with pycard/asc. Interacts (via CARD domain) with pycard/asc (via CARD domain); leading to pro-inflammatory caspases (caspa and/or caspb) recruitment. Pro-caspase-a and pro-caspase-b filament formation increases local enzyme concentration, resulting in trans-autocleavage and activation. Active caspa and caspb then processes il1b and il18 precursors, leading to the release of mature cytokines in the extracellular milieu and inflammatory response. Post-translationally, autocatalytically cleaved. Autocatalytic cleavage in FIIND region occurs constitutively, prior to activation signals, and is required for inflammasome activity (IL1B release), possibly by facilitating pro-inflammatory caspases (caspa and/or caspb) binding. Both N- and C-terminal parts remain associated non-covalently. In terms of processing, ubiquitinated in response to pathogen-associated signals, leading to its degradation by the proteasome and subsequent release of the cleaved C-terminal part of the protein (NACHT, LRR and PYD domains-containing protein 1, C-terminus), which polymerizes and forms the nlrp1 inflammasome. In terms of tissue distribution, expressed in adult spleen, head kidney, gill and skin and also in the embryo.

It is found in the cytoplasm. It localises to the inflammasome. With respect to regulation, nlrp1 inflammasome is activated by pathogens and other damage-associated signals: activation promotes ubiquitination and degradation of the N-terminal part, releasing the cleaved C-terminal part of the protein (NACHT, LRR and PYD domains-containing protein 1, C-terminus), which polymerizes and forms the nlrp1 inflammasome. Acts as the sensor component of the nlrp1 inflammasome, which mediates inflammasome activation in response to various pathogen-associated signals, leading to subsequent pyroptosis. Inflammasomes are supramolecular complexes that assemble in the cytosol in response to pathogens and other damage-associated signals and play critical roles in innate immunity and inflammation. Acts as a recognition receptor (PRR): recognizes specific pathogens and other damage-associated signals, and mediates the formation of the inflammasome polymeric complex. In response to pathogen-associated signals, the N-terminal part of nlrp1 is degraded by the proteasome, releasing the cleaved C-terminal part of the protein (NACHT, LRR and PYD domains-containing protein 1, C-terminus), which polymerizes to initiate the formation of the inflammasome complex: the inflammasome recruits and activate pro-inflammatory caspases (caspa and/or caspb), leading to pyroptosis. Its function is as follows. Constitutes the precursor of the nlrp1 inflammasome, which mediates autoproteolytic processing within the FIIND domain to generate the N-terminal and C-terminal parts, which are associated non-covalently in absence of pathogens and other damage-associated signals. Functionally, regulatory part that prevents formation of the nlrp1 inflammasome: in absence of pathogens and other damage-associated signals, interacts with the C-terminal part of nlrp1 (NACHT, LRR and PYD domains-containing protein 1, C-terminus), preventing activation of the nlrp1 inflammasome. In response to pathogen-associated signals, this part is ubiquitinated and degraded by the proteasome, releasing the cleaved C-terminal part of the protein, which polymerizes and forms the nlrp1 inflammasome. In terms of biological role, constitutes the active part of the nlrp1 inflammasome. In absence of pathogens and other damage-associated signals, interacts with the N-terminal part of nlrp1 (NACHT, LRR and PYD domains-containing protein 1, N-terminus), preventing activation of the nlrp1 inflammasome. In response to pathogen-associated signals, the N-terminal part of nlrp1 is degraded by the proteasome, releasing this form, which polymerizes to form the nlrp1 inflammasome complex: the nlrp1 inflammasome complex then directly recruits and activates pro-inflammatory caspases (caspa and/or caspb) activation, leading to subsequent pyroptosis. In Danio rerio (Zebrafish), this protein is NACHT, LRR and PYD domains-containing protein 1 homolog.